Here is a 445-residue protein sequence, read N- to C-terminus: Ribosomal protein uS12 methylthiotransferase RimO (445 aa).

The MTTase N-terminal domain maps to Pro13–Pro123. [4Fe-4S] cluster contacts are provided by Cys22, Cys58, Cys87, Cys154, Cys158, and Cys161. Residues Leu140–Gln377 form the Radical SAM core domain. In terms of domain architecture, TRAM spans Ala380–Ile445.

This sequence belongs to the methylthiotransferase family. RimO subfamily. It depends on [4Fe-4S] cluster as a cofactor.

The protein localises to the cytoplasm. The catalysed reaction is L-aspartate(89)-[ribosomal protein uS12]-hydrogen + (sulfur carrier)-SH + AH2 + 2 S-adenosyl-L-methionine = 3-methylsulfanyl-L-aspartate(89)-[ribosomal protein uS12]-hydrogen + (sulfur carrier)-H + 5'-deoxyadenosine + L-methionine + A + S-adenosyl-L-homocysteine + 2 H(+). Its function is as follows. Catalyzes the methylthiolation of an aspartic acid residue of ribosomal protein uS12. In Nitrosomonas eutropha (strain DSM 101675 / C91 / Nm57), this protein is Ribosomal protein uS12 methylthiotransferase RimO.